The sequence spans 512 residues: Lysine--tRNA ligase (512 aa).

Mg(2+)-binding residues include E408 and E415.

The protein belongs to the class-II aminoacyl-tRNA synthetase family. As to quaternary structure, homodimer. Mg(2+) serves as cofactor.

Its subcellular location is the cytoplasm. It catalyses the reaction tRNA(Lys) + L-lysine + ATP = L-lysyl-tRNA(Lys) + AMP + diphosphate. This chain is Lysine--tRNA ligase, found in Prochlorococcus marinus (strain MIT 9515).